Consider the following 270-residue polypeptide: Flavin-dependent thymidylate synthase (270 aa).

Positions 13–218 (GFVRLVDQMG…PLAWAAFEEH (206 aa)) constitute a ThyX domain. Residues serine 59, 82–84 (RHR), and glutamate 90 contribute to the FAD site. DUMP-binding positions include 79–82 (QWFR), 90–94 (EISGR), and arginine 157. Positions 82 to 92 (RHRTASVNEIS) match the ThyX motif motif. FAD is bound by residues 173 to 175 (DLH) and histidine 179. DUMP is bound at residue arginine 184. Residue arginine 184 is the Involved in ionization of N3 of dUMP, leading to its activation of the active site.

It belongs to the thymidylate synthase ThyX family. Homotetramer. The cofactor is FAD.

It catalyses the reaction dUMP + (6R)-5,10-methylene-5,6,7,8-tetrahydrofolate + NADPH + H(+) = dTMP + (6S)-5,6,7,8-tetrahydrofolate + NADP(+). The protein operates within pyrimidine metabolism; dTTP biosynthesis. Functionally, catalyzes the reductive methylation of 2'-deoxyuridine-5'-monophosphate (dUMP) to 2'-deoxythymidine-5'-monophosphate (dTMP) while utilizing 5,10-methylenetetrahydrofolate (mTHF) as the methyl donor, and NADPH and FADH(2) as the reductant. This is Flavin-dependent thymidylate synthase from Thermus thermophilus (strain ATCC BAA-163 / DSM 7039 / HB27).